The chain runs to 318 residues: MKNTFSWIKKEITRSISLSLMIYIITRTSISNAYPIFAQQGYENPREATGRIVCANCHLANKPVDIEVPQAVLPDTVFEAVVRIPYDRQVKQVLANGKKGGLNVGAVLILPEGFELAPPARISPEMKERIGNPSFQSYRPTKKNILVIGPVPGQKYSEITFPILSPDPATNKDVHFLKYPIYVGGNRGRGQIYPDGSKSNNTVYNATAAGIVSKIIRKEKGGYEITITDASDGRQVVDIIPSGPELLVSEGESIKLDQPLTSNPNVGGFGQGDAEVVLQDPLRVQGLLFFLASVILAQIFLVLKKKQFEKVQLSEMNF.

The N-terminal stretch at 1-33 (MKNTFSWIKKEITRSISLSLMIYIITRTSISNA) is a signal peptide. Heme-binding residues include Y34, C54, C57, and H58. The helical transmembrane segment at 284–304 (VQGLLFFLASVILAQIFLVLK) threads the bilayer.

Belongs to the cytochrome f family. The 4 large subunits of the cytochrome b6-f complex are cytochrome b6, subunit IV (17 kDa polypeptide, petD), cytochrome f and the Rieske protein, while the 4 small subunits are PetG, PetL, PetM and PetN. The complex functions as a dimer. It depends on heme as a cofactor.

Its subcellular location is the plastid. The protein localises to the chloroplast thylakoid membrane. Component of the cytochrome b6-f complex, which mediates electron transfer between photosystem II (PSII) and photosystem I (PSI), cyclic electron flow around PSI, and state transitions. This chain is Cytochrome f, found in Oenothera biennis (German evening primrose).